Consider the following 182-residue polypeptide: Glycerol-3-phosphate acyltransferase 1 (182 aa).

The next 5 helical transmembrane spans lie at 5 to 25, 54 to 74, 81 to 101, 117 to 137, and 157 to 177; these read MQFL…AYIV, GYFI…VAVA, PTFV…PVLF, IAFD…FYLI, and ILYS…VLIL.

Belongs to the PlsY family. Probably interacts with PlsX.

The protein localises to the cell membrane. The catalysed reaction is an acyl phosphate + sn-glycerol 3-phosphate = a 1-acyl-sn-glycero-3-phosphate + phosphate. The protein operates within lipid metabolism; phospholipid metabolism. Catalyzes the transfer of an acyl group from acyl-phosphate (acyl-PO(4)) to glycerol-3-phosphate (G3P) to form lysophosphatidic acid (LPA). This enzyme utilizes acyl-phosphate as fatty acyl donor, but not acyl-CoA or acyl-ACP. The polypeptide is Glycerol-3-phosphate acyltransferase 1 (Bacillus cereus (strain ATCC 14579 / DSM 31 / CCUG 7414 / JCM 2152 / NBRC 15305 / NCIMB 9373 / NCTC 2599 / NRRL B-3711)).